Here is a 312-residue protein sequence, read N- to C-terminus: Formimidoylglutamase (312 aa).

Mn(2+) contacts are provided by H123, D152, H154, D156, C243, and D245.

The protein belongs to the arginase family. It depends on Mn(2+) as a cofactor.

The catalysed reaction is N-formimidoyl-L-glutamate + H2O = formamide + L-glutamate. It functions in the pathway amino-acid degradation; L-histidine degradation into L-glutamate; L-glutamate from N-formimidoyl-L-glutamate (hydrolase route): step 1/1. In terms of biological role, catalyzes the conversion of N-formimidoyl-L-glutamate to L-glutamate and formamide. The polypeptide is Formimidoylglutamase (Pseudomonas fluorescens (strain ATCC BAA-477 / NRRL B-23932 / Pf-5)).